Reading from the N-terminus, the 127-residue chain is Anti-adapter protein IraD (127 aa).

The protein belongs to the GpW/Gp25 family. IraD subfamily. In terms of assembly, interacts with RssB.

The protein resides in the cytoplasm. Its function is as follows. Inhibits RpoS proteolysis by regulating RssB activity, thereby increasing the stability of the sigma stress factor RpoS during oxidative stress. Its effect on RpoS stability is due to its interaction with RssB, which probably blocks the interaction of RssB with RpoS, and the consequent delivery of the RssB-RpoS complex to the ClpXP protein degradation pathway. The chain is Anti-adapter protein IraD from Escherichia coli O6:H1 (strain CFT073 / ATCC 700928 / UPEC).